Reading from the N-terminus, the 522-residue chain is Leucine-rich repeat transmembrane neuronal protein 1 (522 aa).

The first 34 residues, 1–34 (MDFLLLGLCLHWLLRRPSGVVLCLLGACFQMLPA), serve as a signal peptide directing secretion. The LRRNT domain occupies 35–63 (APSGCPGQCRCEGRLLYCEALNLTEAPHN). The Extracellular portion of the chain corresponds to 35-427 (APSGCPGQCR…HAENAVQIHK (393 aa)). N-linked (GlcNAc...) asparagine glycosylation is found at Asn56 and Asn63. LRR repeat units follow at residues 64 to 87 (LSGL…QFTG), 89 to 111 (MQLT…AFQK), 112 to 135 (LRRV…TFRP), 136 to 159 (MPNL…LFHG), 161 to 183 (RKLT…IFQD), 184 to 207 (CRSL…SFAG), 209 to 231 (FKLT…HFPR), 233 to 255 (ISLH…LDWV), 256 to 278 (WNLE…VFET), and 280 to 302 (PYLQ…ILNS). An N-linked (GlcNAc...) asparagine glycan is attached at Asn130. Residues 314-365 (NLWDCGRNVCALASWLSNFQGRYDANLQCASPEYAQGEDVLDAVYAFHLCED) enclose the LRRCT domain. An N-linked (GlcNAc...) asparagine glycan is attached at Asn381. A helical transmembrane segment spans residues 428–448 (VVTGTMALIFSFLIVVLVLYV). The Cytoplasmic portion of the chain corresponds to 449–522 (SWKCFPASLR…HQQPARECEV (74 aa)).

It belongs to the LRRTM family. As to expression, expressed predominantly in the nervous system by postmitotic neurons, but also in some non-neuronal tissues. In adult brain expression is most prominent in the forebraain, particularly in the thalamus and in the cortical areas including hippocampus, piriform and posterior cingulate.

Its subcellular location is the cell membrane. The protein resides in the postsynaptic cell membrane. Its function is as follows. Exhibits strong synaptogenic activity, restricted to excitatory presynaptic differentiation, acting at both pre- and postsynaptic level. This Mus musculus (Mouse) protein is Leucine-rich repeat transmembrane neuronal protein 1 (Lrrtm1).